Consider the following 614-residue polypeptide: Chaperone protein DnaK (614 aa).

The residue at position 173 (T173) is a Phosphothreonine; by autocatalysis. Basic and acidic residues-rich tracts occupy residues 490-509 (EENAEADKKRREESDLRNEA) and 529-542 (EEDKQNAEDKKEAL). 3 disordered regions span residues 490-510 (EENAEADKKRREESDLRNEAD), 524-555 (GENISEEDKQNAEDKKEALKSALEGEDIDDIK), and 575-614 (QAAQAQQQAQGEDANASQDSNVEDADFKEVKDDDNQDNQK). The span at 575 to 584 (QAAQAQQQAQ) shows a compositional bias: low complexity. A compositionally biased stretch (basic and acidic residues) spans 599–614 (ADFKEVKDDDNQDNQK).

It belongs to the heat shock protein 70 family.

Functionally, acts as a chaperone. This Staphylococcus saprophyticus subsp. saprophyticus (strain ATCC 15305 / DSM 20229 / NCIMB 8711 / NCTC 7292 / S-41) protein is Chaperone protein DnaK.